Here is a 264-residue protein sequence, read N- to C-terminus: Virulence plasmid protein pGP3-D (264 aa).

This Chlamydia muridarum (strain MoPn / Nigg) protein is Virulence plasmid protein pGP3-D.